The primary structure comprises 218 residues: Small ribosomal subunit protein uS3c (218 aa).

The region spanning 47–118 (VQKNMRTSSG…KLNIAVTRIA (72 aa)) is the KH type-2 domain.

It belongs to the universal ribosomal protein uS3 family. As to quaternary structure, part of the 30S ribosomal subunit.

Its subcellular location is the plastid. It is found in the chloroplast. The chain is Small ribosomal subunit protein uS3c (rps3) from Solanum lycopersicum (Tomato).